The following is an 832-amino-acid chain: Mucosa-associated lymphoid tissue lymphoma translocation protein 1 homolog (832 aa).

Positions 1-39 (MSLWGQPLQASPPLAVRQPPTASSGPSTSPPAGATLNRL) are disordered. Ser2 is modified (N-acetylserine). Residues 19–39 (PPTASSGPSTSPPAGATLNRL) are compositionally biased toward low complexity. In terms of domain architecture, Death spans 45–132 (RRLSESLDRA…EVLPLLNPPG (88 aa)). 2 consecutive Ig-like C2-type domains span residues 131 to 207 (PGLK…FEFS) and 218 to 314 (AEVT…KKAE). A Phosphoserine modification is found at Ser141. 2 disulfide bridges follow: Cys154/Cys196 and Cys257/Cys299. Positions 356-570 (IGNMSYWEHP…SLSEKRALTD (215 aa)) are caspase-like. The Nuclear export signal motif lies at 377 to 384 (LTNLLRQL). Active-site residues include His423 and Cys472.

This sequence belongs to the peptidase C14B family. Homooligomer; forms oligomers which bind to TRAF6. Forms a complex with CARD14 and MALT1; resulting in the formation of a CBM (CARD14-BCL10-MALT1) complex. Forms a complex with CARD11 and MALT1; resulting in the formation of a CBM (CARD11-BCL10-MALT1) complex. Forms a complex with CARD9 and MALT1; resulting in the formation of a CBM (CARD9-BCL10-MALT1) complex.

Its subcellular location is the cytoplasm. It is found in the perinuclear region. It localises to the nucleus. In terms of biological role, protease that enhances BCL10-induced activation: acts via formation of CBM complexes that channel adaptive and innate immune signaling downstream of CARD domain-containing proteins (CARD9, CARD11 and CARD14) to activate NF-kappa-B and MAP kinase p38 pathways which stimulate expression of genes encoding pro-inflammatory cytokines and chemokines. Mediates BCL10 cleavage: MALT1-dependent BCL10 cleavage plays an important role in T-cell antigen receptor-induced integrin adhesion. Involved in the induction of T helper 17 cells (Th17) differentiation. Cleaves RC3H1 and ZC3H12A in response to T-cell receptor (TCR) stimulation which releases their cooperatively repressed targets to promote Th17 cell differentiation. Also mediates cleavage of N4BP1 in T-cells following TCR-mediated activation, leading to N4BP1 inactivation. May also have ubiquitin ligase activity: binds to TRAF6, inducing TRAF6 oligomerization and activation of its ligase activity. This Mus musculus (Mouse) protein is Mucosa-associated lymphoid tissue lymphoma translocation protein 1 homolog.